The sequence spans 353 residues: Ribosomal RNA large subunit methyltransferase M (353 aa).

Residues Ser183, 216 to 219 (APGG), Asp235, Asp255, and Asp271 each bind S-adenosyl-L-methionine. The active-site Proton acceptor is Lys300.

It belongs to the class I-like SAM-binding methyltransferase superfamily. RNA methyltransferase RlmE family. RlmM subfamily. In terms of assembly, monomer.

The protein resides in the cytoplasm. The catalysed reaction is cytidine(2498) in 23S rRNA + S-adenosyl-L-methionine = 2'-O-methylcytidine(2498) in 23S rRNA + S-adenosyl-L-homocysteine + H(+). Catalyzes the 2'-O-methylation at nucleotide C2498 in 23S rRNA. The protein is Ribosomal RNA large subunit methyltransferase M of Azotobacter vinelandii (strain DJ / ATCC BAA-1303).